An 883-amino-acid chain; its full sequence is DNA mismatch repair protein MutS (883 aa).

Residue 619 to 626 (GPNMGGKS) coordinates ATP.

This sequence belongs to the DNA mismatch repair MutS family.

Its function is as follows. This protein is involved in the repair of mismatches in DNA. It is possible that it carries out the mismatch recognition step. This protein has a weak ATPase activity. This Marinomonas sp. (strain MWYL1) protein is DNA mismatch repair protein MutS.